A 392-amino-acid polypeptide reads, in one-letter code: Gastricsin (392 aa).

The N-terminal stretch at 1–16 (MKWMVVALLCLPLLEA) is a signal peptide. Positions 17–62 (SLLRVPLRKMKSIRETMKEQGVLKDFLKTHKYDPGQKYHFGNFGDY) are cleaved as a propeptide — activation peptide. The Peptidase A1 domain maps to 76-389 (YFGEISIGTP…DMGNNKVGLA (314 aa)). Asp94 is a catalytic residue. 2 disulfide bridges follow: Cys107–Cys112 and Cys270–Cys275. Residue Asp280 is part of the active site. Cys314 and Cys347 are disulfide-bonded.

The protein belongs to the peptidase A1 family.

The protein localises to the secreted. The enzyme catalyses More restricted specificity than pepsin A, but shows preferential cleavage at Tyr-|-Xaa bonds. High activity on hemoglobin.. In terms of biological role, hydrolyzes a variety of proteins. This is Gastricsin (Pgc) from Rattus norvegicus (Rat).